The primary structure comprises 131 residues: 1,4-dihydroxy-2-naphthoyl-CoA hydrolase (131 aa).

Aspartate 7 is a catalytic residue.

The protein belongs to the 4-hydroxybenzoyl-CoA thioesterase family. DHNA-CoA hydrolase subfamily.

It catalyses the reaction 1,4-dihydroxy-2-naphthoyl-CoA + H2O = 1,4-dihydroxy-2-naphthoate + CoA + H(+). The protein operates within cofactor biosynthesis; phylloquinone biosynthesis. It functions in the pathway quinol/quinone metabolism; 1,4-dihydroxy-2-naphthoate biosynthesis; 1,4-dihydroxy-2-naphthoate from chorismate: step 7/7. In terms of biological role, catalyzes the hydrolysis of 1,4-dihydroxy-2-naphthoyl-CoA (DHNA-CoA) to 1,4-dihydroxy-2-naphthoate (DHNA), a reaction involved in phylloquinone (vitamin K1) biosynthesis. The protein is 1,4-dihydroxy-2-naphthoyl-CoA hydrolase of Synechococcus sp. (strain RCC307).